A 340-amino-acid chain; its full sequence is tRNA N6-adenosine threonylcarbamoyltransferase (340 aa).

Positions 111 and 115 each coordinate Fe cation. Substrate-binding positions include 134–138, D167, G180, and N276; that span reads LVSGG. D304 lines the Fe cation pocket.

Belongs to the KAE1 / TsaD family. The cofactor is Fe(2+).

The protein localises to the cytoplasm. It catalyses the reaction L-threonylcarbamoyladenylate + adenosine(37) in tRNA = N(6)-L-threonylcarbamoyladenosine(37) in tRNA + AMP + H(+). Functionally, required for the formation of a threonylcarbamoyl group on adenosine at position 37 (t(6)A37) in tRNAs that read codons beginning with adenine. Is involved in the transfer of the threonylcarbamoyl moiety of threonylcarbamoyl-AMP (TC-AMP) to the N6 group of A37, together with TsaE and TsaB. TsaD likely plays a direct catalytic role in this reaction. This chain is tRNA N6-adenosine threonylcarbamoyltransferase, found in Helicobacter pylori (strain J99 / ATCC 700824) (Campylobacter pylori J99).